Here is a 549-residue protein sequence, read N- to C-terminus: MNYTVKFQNVTKKYKMYNKPSDKLKDLFRKQEDGVFHYALSNVSFEVPKGEIVGIIGLNGSGKSTLSNLIAGVTMPNKGKIDIKGSAALIAISSGLNGQLSGIENIELKGLMMGLTKEKVKEIIPQIIEFADIGKFINQPVKTYSSGMKARLGFAISVNINPDVLVIDEALSVGDQTFTNKCLKKMNEFKEKGKTIFFISHSLNQVNSFCTKAIWLYYGQVREYGDVNDVVANYRAFLKEYNQMSMEDRKKFQEEQVLQFQHGLLQDYAKETLTNPRRLKGERRKYKKKNRVILGISLALMAGIISVGVYYKDIFPIKQDTQHVKQAVQGEDTNEAKQDKRQRVEENMYMVKSNGINIRKEASASSEKLAVANFGDIITIFDDNKSKEKDAEWIQVSLSKGEIGWVSTKFIEPFKSNDSIIEDAKLADITALLKRVYGENMASAPTYFGKTLNELKATYPQPLNPLPSMAGKTIVKDGNIQFGILQDKVVEVVFQDISMSIAKLHELLGKESLSNDVEKNYFYETKSYYIAARSDQTHREIQSISIVKK.

Residues 22 to 243 enclose the ABC transporter domain; the sequence is DKLKDLFRKQ…YRAFLKEYNQ (222 aa). ATP is bound at residue 57 to 64; it reads GLNGSGKS. Positions 244–549 are unknown; it reads MSMEDRKKFQ…EIQSISIVKK (306 aa). The 70-residue stretch at 346-415 folds into the SH3b domain; it reads ENMYMVKSNG…VSTKFIEPFK (70 aa).

The protein belongs to the ABC transporter superfamily. Teichoic acids exporter (TC 3.A.1.104.1) family. The complex is composed of two ATP-binding proteins (TagH) and two transmembrane proteins (TagG).

It is found in the cell membrane. It catalyses the reaction ATP + H2O + teichoic acidSide 1 = ADP + phosphate + teichoic acidSide 2.. Functionally, part of the ABC transporter complex TagGH involved in teichoic acids export. Responsible for energy coupling to the transport system. This Bacillus cereus (strain ZK / E33L) protein is Teichoic acids export ATP-binding protein TagH.